A 341-amino-acid polypeptide reads, in one-letter code: 1-aminocyclopropane-1-carboxylate deaminase (341 aa).

An N-acetylserine modification is found at serine 1. The residue at position 51 (lysine 51) is an N6-(pyridoxal phosphate)lysine. Serine 78 (nucleophile) is an active-site residue.

This sequence belongs to the ACC deaminase/D-cysteine desulfhydrase family. As to quaternary structure, homodimer. The cofactor is pyridoxal 5'-phosphate.

It carries out the reaction 1-aminocyclopropane-1-carboxylate + H2O = 2-oxobutanoate + NH4(+). Catalyzes a cyclopropane ring-opening reaction, the irreversible conversion of 1-aminocyclopropane-1-carboxylate (ACC) to ammonia and alpha-ketobutyrate. In Cyberlindnera saturnus (Yeast), this protein is 1-aminocyclopropane-1-carboxylate deaminase.